We begin with the raw amino-acid sequence, 107 residues long: uncharacterized protein (107 aa).

Residues 1-18 form the signal peptide; that stretch reads MRTLMLIILSILIYLSSA.

This is an uncharacterized protein from Caenorhabditis elegans.